The primary structure comprises 456 residues: Gamma-glutamyl phosphate reductase (456 aa).

At Ser2 the chain carries N-acetylserine.

Belongs to the gamma-glutamyl phosphate reductase family.

It carries out the reaction L-glutamate 5-semialdehyde + phosphate + NADP(+) = L-glutamyl 5-phosphate + NADPH + H(+). It functions in the pathway amino-acid biosynthesis; L-proline biosynthesis; L-glutamate 5-semialdehyde from L-glutamate: step 2/2. Catalyzes the NADPH dependent reduction of L-gamma-glutamyl 5-phosphate into L-glutamate 5-semialdehyde and phosphate. The product spontaneously undergoes cyclization to form 1-pyrroline-5-carboxylate. The sequence is that of Gamma-glutamyl phosphate reductase (PRO2) from Saccharomyces cerevisiae (strain ATCC 204508 / S288c) (Baker's yeast).